We begin with the raw amino-acid sequence, 775 residues long: Kazrin (775 aa).

Positions 38–66 (AELSGGGGPGPGPGAAASASAAGDSAATN) are disordered. Positions 51-64 (GAAASASAAGDSAA) are enriched in low complexity. Residues 74 to 256 (AQVLLREEVS…LATLTKDVPK (183 aa)) adopt a coiled-coil conformation. Residues 174-333 (RDFIRNYEQH…SAAEGDRSST (160 aa)) form an interaction with PPL region. Residues 290 to 427 (QQTLYHSHPP…QSLSLSEGEE (138 aa)) form a disordered region. Residues Ser352, Ser367, and Ser387 each carry the phosphoserine modification. Polar residues predominate over residues 411 to 422 (SQCSPTRQSLSL). SAM domains follow at residues 446–511 (WKAG…YRDA), 524–588 (DHHW…LYQV), and 612–679 (WTNQ…SAVF). Disordered stretches follow at residues 688 to 715 (REAE…SSGL) and 729 to 762 (RGFS…LEQC). The segment covering 732-742 (SSKDPDFHDDY) has biased composition (basic and acidic residues).

This sequence belongs to the kazrin family. Isoform 2, isoform 3 and isoform 4 interact with PPL N-terminus. As to expression, isoform 2, isoform 3 and isoform 4 are expressed in several cell lines including keratinocytes and bladder and epidermoid carcinoma (at protein level). Isoform 2, isoform 3 and isoform 4 are expressed in hair follicle and interfollicular epidermis (at protein level).

Its subcellular location is the cytoplasm. The protein localises to the cytoskeleton. The protein resides in the cell junction. It is found in the desmosome. It localises to the nucleus. In terms of biological role, component of the cornified envelope of keratinocytes. May be involved in the interplay between adherens junctions and desmosomes. The function in the nucleus is not known. The chain is Kazrin from Homo sapiens (Human).